Here is a 390-residue protein sequence, read N- to C-terminus: Succinate--CoA ligase [ADP-forming] subunit beta (390 aa).

One can recognise an ATP-grasp domain in the interval 9 to 244 (KEIFRKYGVP…LDEEEPTEVE (236 aa)). ATP-binding positions include lysine 46, 53–55 (GRG), glutamate 99, alanine 102, and glutamate 107. Mg(2+)-binding residues include asparagine 199 and aspartate 213. Substrate-binding positions include asparagine 264 and 321–323 (GIV).

This sequence belongs to the succinate/malate CoA ligase beta subunit family. As to quaternary structure, heterotetramer of two alpha and two beta subunits. The cofactor is Mg(2+).

The catalysed reaction is succinate + ATP + CoA = succinyl-CoA + ADP + phosphate. The enzyme catalyses GTP + succinate + CoA = succinyl-CoA + GDP + phosphate. Its pathway is carbohydrate metabolism; tricarboxylic acid cycle; succinate from succinyl-CoA (ligase route): step 1/1. Functionally, succinyl-CoA synthetase functions in the citric acid cycle (TCA), coupling the hydrolysis of succinyl-CoA to the synthesis of either ATP or GTP and thus represents the only step of substrate-level phosphorylation in the TCA. The beta subunit provides nucleotide specificity of the enzyme and binds the substrate succinate, while the binding sites for coenzyme A and phosphate are found in the alpha subunit. In Nautilia profundicola (strain ATCC BAA-1463 / DSM 18972 / AmH), this protein is Succinate--CoA ligase [ADP-forming] subunit beta.